Consider the following 694-residue polypeptide: DNA-binding protein RFX2 (694 aa).

Positions 174 to 249 (HLQWLLDNYE…YHYYGIRLKP (76 aa)) form a DNA-binding region, RFX-type winged-helix. Disordered regions lie at residues 267 to 310 (QQPI…QHHQ) and 658 to 694 (KDDV…MQEM). A compositionally biased stretch (polar residues) spans 289 to 299 (PANSSQHASPE). The span at 300-310 (QSVAAQSQHHQ) shows a compositional bias: low complexity.

It belongs to the RFX family. In terms of assembly, homodimer. Heterodimer; heterodimerizes with other rfx proteins. In terms of tissue distribution, preferentially expressed in ciliated tissues, such as neural tube, gastrocoel roof plate, epidermal multiciliated cells, otic vesicles and kidneys.

It is found in the nucleus. The protein localises to the cytoplasm. In terms of biological role, transcription factor that acts as a key regulator of ciliogenesis. Specifically regulates expression of genes required for cilium assembly and function. Recognizes and binds the X-box, a regulatory motif with DNA sequence 5'-GTNRCC(0-3N)RGYAAC-3' present on promoters. Required for neural tube closure and neural ciliogenesis. This is DNA-binding protein RFX2 (rfx2) from Xenopus laevis (African clawed frog).